Here is a 295-residue protein sequence, read N- to C-terminus: Defective in cullin neddylation protein AAR3 (295 aa).

The DCUN1 domain occupies 1-180 (MDSSPVSARF…LIDDFVEHMY (180 aa)). The Nuclear localization signal motif lies at 214–221 (YRRPHTGL). Positions 214–251 (YRRPHTGLRNIPGLKRKTSKKNDEEEEDEDEEVLETQN) are disordered. Residues 237–247 (EEEEDEDEEVL) are compositionally biased toward acidic residues.

Its subcellular location is the nucleus. Its function is as follows. May contribute to the neddylation of all cullins by transferring NEDD8 from N-terminally acetylated NEDD8-conjugating E2s enzyme to different cullin C-terminal domain-RBX complexes; neddylation of cullins play an essential role in the regulation of SCF-type complexes activity. Regulates responses to the synthetic auxin 2,4-dichlorophenoxyacetic acid (2,4-D) in roots, probably by modulating the SCF(TIR1) ubiquitin E3 ligase complex-mediated proteolysis. This Arabidopsis thaliana (Mouse-ear cress) protein is Defective in cullin neddylation protein AAR3.